The sequence spans 141 residues: Organic hydroperoxide resistance protein OhrA (141 aa).

The protein belongs to the OsmC/Ohr family.

Functionally, involved in organic hydroperoxide resistance. The sequence is that of Organic hydroperoxide resistance protein OhrA (ohrA) from Bacillus subtilis (strain 168).